The sequence spans 737 residues: Alpha-adducin (737 aa).

M1 is modified (N-acetylmethionine). A disordered region spans residues 1-21 (MNGDSRAAVVTSPPPTTAPHK). S12 carries the post-translational modification Phosphoserine. The residue at position 59 (S59) is a Phosphoserine; by PKA. Residue S64 is modified to Phosphoserine. The residue at position 331 (T331) is a Phosphothreonine. Phosphoserine occurs at positions 334, 353, 355, 358, and 366. The residue at position 408 (S408) is a Phosphoserine; by PKA. Disordered stretches follow at residues 421 to 486 (FASD…SAVP) and 576 to 737 (RREV…KSDS). Phosphoserine is present on S427. T429 carries the post-translational modification Phosphothreonine. Position 431 is a phosphoserine (S431). S436 is modified (phosphoserine; by PKA). T445 bears the Phosphothreonine; by ROCK2 mark. Phosphoserine is present on residues S464 and S465. Phosphothreonine; by ROCK2 is present on T480. Position 481 is a phosphoserine; by PKA (S481). Basic and acidic residues predominate over residues 576–601 (RREVERKQKGSEENLDEAREQKEKSP). 3 positions are modified to phosphoserine: S586, S600, and S613. The span at 602-614 (PDQPAVPHPPPST) shows a compositional bias: pro residues. At T614 the chain carries Phosphothreonine. 4 positions are modified to phosphoserine: S678, S707, S710, and S714. The span at 687-714 (PVAEEAAPSAVEEGAAADPGSDGSPGKS) shows a compositional bias: low complexity. Basic residues predominate over residues 715–737 (PSKKKKKFRTPSFLKKSKKKSDS). Phosphoserine; by PKC is present on S716. The interaction with calmodulin stretch occupies residues 717-734 (KKKKKFRTPSFLKKSKKK). A Phosphoserine; by PKA and PKC modification is found at S726.

This sequence belongs to the aldolase class II family. Adducin subfamily. In terms of assembly, heterodimer of an alpha and a beta subunit or an alpha and a gamma subunit. Expressed in all tissues. Found in much higher levels in reticulocytes than the beta subunit.

The protein resides in the cytoplasm. It is found in the cytoskeleton. The protein localises to the cell membrane. Membrane-cytoskeleton-associated protein that promotes the assembly of the spectrin-actin network. Binds to calmodulin. This Homo sapiens (Human) protein is Alpha-adducin (ADD1).